The following is a 433-amino-acid chain: Chaperone SurA (433 aa).

Positions 1 to 24 (MKYRIKALLLASSLIITTITSVQA) are cleaved as a signal peptide. PpiC domains are found at residues 175–276 (NVEY…KVLD) and 285–384 (VEEV…KLED).

The protein resides in the periplasm. The catalysed reaction is [protein]-peptidylproline (omega=180) = [protein]-peptidylproline (omega=0). In terms of biological role, chaperone involved in the correct folding and assembly of outer membrane proteins. Recognizes specific patterns of aromatic residues and the orientation of their side chains, which are found more frequently in integral outer membrane proteins. May act in both early periplasmic and late outer membrane-associated steps of protein maturation. This Colwellia psychrerythraea (strain 34H / ATCC BAA-681) (Vibrio psychroerythus) protein is Chaperone SurA.